The following is a 54-amino-acid chain: Large ribosomal subunit protein bL32 (54 aa).

Residues 1–26 are disordered; it reads MAVQKNKPTRSKRGMRRSHDSLTAPH. Over residues 7–16 the composition is skewed to basic residues; sequence KPTRSKRGMR.

It belongs to the bacterial ribosomal protein bL32 family.

This Buchnera aphidicola subsp. Acyrthosiphon pisum (strain 5A) protein is Large ribosomal subunit protein bL32.